The primary structure comprises 159 residues: 17.7 kDa class I heat shock protein (159 aa).

One can recognise a sHSP domain in the interval 45 to 159 (DAAAFAGARI…PDVKSIQISG (115 aa)).

It belongs to the small heat shock protein (HSP20) family. In terms of assembly, may form oligomeric structures.

It localises to the cytoplasm. The sequence is that of 17.7 kDa class I heat shock protein (HSP17.7) from Oryza sativa subsp. japonica (Rice).